The sequence spans 312 residues: Methionyl-tRNA formyltransferase (312 aa).

109–112 lines the (6S)-5,6,7,8-tetrahydrofolate pocket; it reads SLLP.

This sequence belongs to the Fmt family.

It catalyses the reaction L-methionyl-tRNA(fMet) + (6R)-10-formyltetrahydrofolate = N-formyl-L-methionyl-tRNA(fMet) + (6S)-5,6,7,8-tetrahydrofolate + H(+). Attaches a formyl group to the free amino group of methionyl-tRNA(fMet). The formyl group appears to play a dual role in the initiator identity of N-formylmethionyl-tRNA by promoting its recognition by IF2 and preventing the misappropriation of this tRNA by the elongation apparatus. The chain is Methionyl-tRNA formyltransferase from Listeria monocytogenes serotype 4a (strain HCC23).